The following is a 199-amino-acid chain: Fe/S biogenesis protein NfuA (199 aa).

2 residues coordinate [4Fe-4S] cluster: Cys151 and Cys154.

It belongs to the NfuA family. Homodimer. The cofactor is [4Fe-4S] cluster.

In terms of biological role, involved in iron-sulfur cluster biogenesis. Binds a 4Fe-4S cluster, can transfer this cluster to apoproteins, and thereby intervenes in the maturation of Fe/S proteins. Could also act as a scaffold/chaperone for damaged Fe/S proteins. This Xanthomonas oryzae pv. oryzae (strain MAFF 311018) protein is Fe/S biogenesis protein NfuA.